Reading from the N-terminus, the 1704-residue chain is Phospholipid-transporting ATPase ABCA3 (1704 aa).

An N-linked (GlcNAc...) asparagine glycan is attached at N14. A helical membrane pass occupies residues 22–42; the sequence is VLVTVLELFLPLLFSGILIWL. N-linked (GlcNAc...) asparagine glycosylation is found at N53, N124, and N140. 6 consecutive transmembrane segments (helical) span residues 261–283, 307–327, 344–364, 373–393, 405–425, and 447–467; these read YQLP…RAVV, AWFL…TLLF, SLVL…SFMV, MAAA…FFVA, LCSC…IGKF, and FCFG…GLVT. The 234-residue stretch at 530–763 folds into the ABC transporter 1 domain; sequence IKIKHLSKVF…YGAGYHMTLV (234 aa). An ATP-binding site is contributed by 566 to 573; sequence GHNGAGKT. N-linked (GlcNAc...) asparagine glycosylation is found at N620 and N783. Helical transmembrane passes span 925–945, 1100–1120, 1144–1164, 1183–1203, 1213–1233, 1245–1265, and 1306–1326; these read MVAA…LAIN, IALN…ILAV, SALL…LVVF, LLLL…NFFF, LTIF…IMRI, LDHV…SSFY, and FVAS…LIET. One can recognise an ABC transporter 2 domain in the interval 1381–1614; it reads LIIKELSKVY…FGSGYSLRAK (234 aa). 1416–1423 is a binding site for ATP; sequence GFNGAGKT.

This sequence belongs to the ABC transporter superfamily. ABCA family. In terms of assembly, homooligomer; disulfide-linked. N-glycosylated. Localization at intracellular vesicles is accompanied by processing of oligosaccharide from high mannose type to complex type. N-linked glycosylation at Asn-124 and Asn-140 is required for stability and efficient anterograde trafficking and prevents from proteasomal degradation. Post-translationally, proteolytically cleaved by CTSL and to a lower extent by CTSB within multivesicular bodies (MVB) and lamellar bodies (LB) leading to a mature form of 150 kDa. Expressed in brain, pancreas, skeletal muscle and heart. Highly expressed in the lung in an AT2-cell-specific manner. Weakly expressed in placenta, kidney and liver. Also expressed in medullary thyroid carcinoma cells (MTC) and in C-cell carcinoma.

Its subcellular location is the endosome. The protein localises to the multivesicular body membrane. It localises to the cytoplasmic vesicle membrane. The protein resides in the late endosome membrane. It is found in the lysosome membrane. The catalysed reaction is ATP + H2O + xenobioticSide 1 = ADP + phosphate + xenobioticSide 2.. The enzyme catalyses a 1,2-diacyl-sn-glycero-3-phosphocholine(in) + ATP + H2O = a 1,2-diacyl-sn-glycero-3-phosphocholine(out) + ADP + phosphate + H(+). It catalyses the reaction ATP + H2O + phospholipidSide 1 = ADP + phosphate + phospholipidSide 2.. It carries out the reaction 1,2-dihexadecanoyl-sn-glycero-3-phosphocholine(in) + ATP + H2O = 1,2-dihexadecanoyl-sn-glycero-3-phosphocholine(out) + ADP + phosphate + H(+). The catalysed reaction is cholesterol(in) + ATP + H2O = cholesterol(out) + ADP + phosphate + H(+). The enzyme catalyses a 1,2-diacyl-sn-glycero-3-phospho-(1'-sn-glycerol)(in) + ATP + H2O = a 1,2-diacyl-sn-glycero-3-phospho-(1'-sn-glycerol)(out) + ADP + phosphate + H(+). With respect to regulation, the ATP-dependent phosphatidylcholine transport is competitively inhibited by miltefosine. Catalyzes the ATP-dependent transport of phospholipids such as phosphatidylcholine and phosphoglycerol from the cytoplasm into the lumen side of lamellar bodies, in turn participates in the lamellar bodies biogenesis and homeostasis of pulmonary surfactant. Transports preferentially phosphatidylcholine containing short acyl chains. In addition plays a role as an efflux transporter of miltefosine across macrophage membranes and free cholesterol (FC) through intralumenal vesicles by removing FC from the cell as a component of surfactant and protects cells from free cholesterol toxicity. This is Phospholipid-transporting ATPase ABCA3 from Homo sapiens (Human).